Consider the following 124-residue polypeptide: Seripauperin-23 (124 aa).

The first 20 residues, 1–20 (MVKLTSIVAGVAAIAAGVAA), serve as a signal peptide directing secretion.

Belongs to the SRP1/TIP1 family. Seripauperin subfamily. Post-translationally, O-glycosylated.

The protein localises to the secreted. The protein resides in the cell wall. Functionally, component of the cell wall. The chain is Seripauperin-23 (PAU23) from Saccharomyces cerevisiae (strain ATCC 204508 / S288c) (Baker's yeast).